The primary structure comprises 533 residues: uncharacterized protein (533 aa).

A disordered region spans residues 1 to 26; sequence MKRFFSKLFSKSPTSGRVPSPDSDYS. Phosphoserine occurs at positions 20 and 23. A Phosphotyrosine modification is found at tyrosine 25. Phosphoserine is present on serine 26. Helical transmembrane passes span 178–198, 213–230, 242–264, 274–296, 313–333, 353–373, 394–414, 435–455, 466–486, and 495–515; these read ILAVLHIPVALIWLNLEHILI, YMRVFILAAPGYAVFEAL, PITYVLCFAAPLNILLNYLLVWH, APVAVATTFWFQSICLILYICFS, LSPMLHFSFHGMLMIVTEWAA, SILLTSTSLLFQIPFAFAVAS, RVAYSLALCISIFDGSLIFCF, IFPILSLFIVTDGLNAVGGGL, GLISIGSSYLFALPVTVFVVV, and IWCGMILSSVTAITCQFTVLF.

Belongs to the multi antimicrobial extrusion (MATE) (TC 2.A.66.1) family.

It localises to the vacuole membrane. This is an uncharacterized protein from Schizosaccharomyces pombe (strain 972 / ATCC 24843) (Fission yeast).